A 58-amino-acid polypeptide reads, in one-letter code: MATIKIKQIGSPIRRPESQKKVLIGLGLGKMHRVVEVEDTPEVRGAIAKLPHMVAVVD.

Belongs to the universal ribosomal protein uL30 family. Part of the 50S ribosomal subunit.

This chain is Large ribosomal subunit protein uL30, found in Novosphingobium aromaticivorans (strain ATCC 700278 / DSM 12444 / CCUG 56034 / CIP 105152 / NBRC 16084 / F199).